Consider the following 98-residue polypeptide: Lipolysis-activating peptide 1-alpha chain (98 aa).

A signal peptide spans 1–22 (MMKLVLFGIIVILFSMIGSIHG). Positions 26–89 (PGNYPLNTYG…IWDAVKRHCK (64 aa)) constitute an LCN-type CS-alpha/beta domain. Intrachain disulfides connect Cys40–Cys63, Cys49–Cys68, and Cys53–Cys70. The residue at position 96 (Lys96) is a Lysine amide.

It belongs to the long (3 C-C) scorpion toxin superfamily. In terms of assembly, monomer (edited version) and heterodimer (non-edited version) of this alpha chain and a beta chain (AC B8XGZ8). Expressed by the venom gland.

Its subcellular location is the secreted. Functionally, the heterodimer non-edited LVP1 induces lipolysis in rat adipocytes. Induction of lipolysis by LVP1 appears to be mediated through the beta-2 adrenergic receptor pathway (ADRB2). In terms of biological role, the edited BmKBTx-like, similar to beta-toxins, may modulate voltage-gated sodium channels (Nav) and may block voltage-gated potassium channels (Kv). The polypeptide is Lipolysis-activating peptide 1-alpha chain (Buthus israelis (Israeli scorpion)).